The sequence spans 459 residues: Ribulose bisphosphate carboxylase large chain (459 aa).

N6,N6,N6-trimethyllysine is present on Lys-4. Substrate contacts are provided by Asn-113 and Thr-163. Catalysis depends on Lys-165, which acts as the Proton acceptor. Lys-167 is a substrate binding site. Residues Lys-191, Asp-193, and Glu-194 each contribute to the Mg(2+) site. Position 191 is an N6-carboxylysine (Lys-191). His-284 serves as the catalytic Proton acceptor. Residues Arg-285, His-317, and Ser-369 each contribute to the substrate site.

Belongs to the RuBisCO large chain family. Type I subfamily. Heterohexadecamer of 8 large chains and 8 small chains; disulfide-linked. The disulfide link is formed within the large subunit homodimers. The cofactor is Mg(2+). The disulfide bond which can form in the large chain dimeric partners within the hexadecamer appears to be associated with oxidative stress and protein turnover.

It is found in the plastid. Its subcellular location is the chloroplast. The catalysed reaction is 2 (2R)-3-phosphoglycerate + 2 H(+) = D-ribulose 1,5-bisphosphate + CO2 + H2O. It carries out the reaction D-ribulose 1,5-bisphosphate + O2 = 2-phosphoglycolate + (2R)-3-phosphoglycerate + 2 H(+). Functionally, ruBisCO catalyzes two reactions: the carboxylation of D-ribulose 1,5-bisphosphate, the primary event in carbon dioxide fixation, as well as the oxidative fragmentation of the pentose substrate in the photorespiration process. Both reactions occur simultaneously and in competition at the same active site. The polypeptide is Ribulose bisphosphate carboxylase large chain (Ceratopetalum gummiferum (New South Wales Christmas bush)).